We begin with the raw amino-acid sequence, 428 residues long: Aerobic C4-dicarboxylate transport protein (428 aa).

9 helical membrane-spanning segments follow: residues 5-27 (LFKS…GHYY), 47-64 (MIIA…IAGM), 77-99 (ALLY…VNVV), 141-163 (VIGA…FGFA), 184-206 (VIFG…AMAF), 216-238 (LVQL…VVVL), 289-311 (VVGL…YLTM), 326-348 (IFHQ…GVTG), and 353-375 (VLAA…ILGI).

The protein belongs to the dicarboxylate/amino acid:cation symporter (DAACS) (TC 2.A.23) family.

The protein resides in the cell inner membrane. Responsible for the transport of dicarboxylates such as succinate, fumarate, and malate from the periplasm across the membrane. The protein is Aerobic C4-dicarboxylate transport protein of Salmonella typhi.